A 149-amino-acid polypeptide reads, in one-letter code: 3-hydroxyacyl-[acyl-carrier-protein] dehydratase FabZ (149 aa).

The active site involves His-49.

Belongs to the thioester dehydratase family. FabZ subfamily.

Its subcellular location is the cytoplasm. The enzyme catalyses a (3R)-hydroxyacyl-[ACP] = a (2E)-enoyl-[ACP] + H2O. Functionally, involved in unsaturated fatty acids biosynthesis. Catalyzes the dehydration of short chain beta-hydroxyacyl-ACPs and long chain saturated and unsaturated beta-hydroxyacyl-ACPs. The chain is 3-hydroxyacyl-[acyl-carrier-protein] dehydratase FabZ from Sulfurimonas denitrificans (strain ATCC 33889 / DSM 1251) (Thiomicrospira denitrificans (strain ATCC 33889 / DSM 1251)).